The sequence spans 446 residues: Maltoporin (446 aa).

A signal peptide spans 1–25 (MMITLRKLPLAVAVAAGVMSAQAMA).

The protein belongs to the porin LamB (TC 1.B.3) family. As to quaternary structure, homotrimer formed of three 18-stranded antiparallel beta-barrels, containing three independent channels.

Its subcellular location is the cell outer membrane. It catalyses the reaction beta-maltose(in) = beta-maltose(out). In terms of biological role, involved in the transport of maltose and maltodextrins. The sequence is that of Maltoporin from Escherichia coli O127:H6 (strain E2348/69 / EPEC).